The following is a 565-amino-acid chain: NAD-dependent malic enzyme (565 aa).

The active-site Proton donor is the Tyr-104. Arg-157 serves as a coordination point for NAD(+). Lys-175 serves as the catalytic Proton acceptor. Residues Glu-246, Asp-247, and Asp-270 each contribute to the a divalent metal cation site. The NAD(+) site is built by Asp-270 and Asn-418.

This sequence belongs to the malic enzymes family. As to quaternary structure, homotetramer. Mg(2+) is required as a cofactor. Mn(2+) serves as cofactor.

The catalysed reaction is (S)-malate + NAD(+) = pyruvate + CO2 + NADH. It catalyses the reaction oxaloacetate + H(+) = pyruvate + CO2. The polypeptide is NAD-dependent malic enzyme (Klebsiella pneumoniae subsp. pneumoniae (strain ATCC 700721 / MGH 78578)).